Reading from the N-terminus, the 72-residue chain is Penaeidin-2b (72 aa).

An N-terminal signal peptide occupies residues 1–21; sequence MRLVVCLVFLASFALVCQGEA. 3 cysteine pairs are disulfide-bonded: C45/C59, C48/C66, and C60/C67. K71 carries the lysine amide modification.

This sequence belongs to the penaeidin family.

It is found in the cytoplasmic granule. Antibacterial and antifungal activity. Presents chitin-binding activity. This is Penaeidin-2b from Penaeus vannamei (Whiteleg shrimp).